Consider the following 341-residue polypeptide: tRNA N6-adenosine threonylcarbamoyltransferase (341 aa).

Fe cation contacts are provided by His111 and His115. Residues 134 to 138 (LVSGG), Asp167, Gly180, and Asn274 contribute to the substrate site. Asp302 is a binding site for Fe cation.

It belongs to the KAE1 / TsaD family. It depends on Fe(2+) as a cofactor.

The protein resides in the cytoplasm. The enzyme catalyses L-threonylcarbamoyladenylate + adenosine(37) in tRNA = N(6)-L-threonylcarbamoyladenosine(37) in tRNA + AMP + H(+). Functionally, required for the formation of a threonylcarbamoyl group on adenosine at position 37 (t(6)A37) in tRNAs that read codons beginning with adenine. Is involved in the transfer of the threonylcarbamoyl moiety of threonylcarbamoyl-AMP (TC-AMP) to the N6 group of A37, together with TsaE and TsaB. TsaD likely plays a direct catalytic role in this reaction. This is tRNA N6-adenosine threonylcarbamoyltransferase from Paraburkholderia phymatum (strain DSM 17167 / CIP 108236 / LMG 21445 / STM815) (Burkholderia phymatum).